Here is a 230-residue protein sequence, read N- to C-terminus: MTTAHRPTFHPARGGTARGEGDLSKLSNQYSSKDMPSHTKMKYRQTGQETEADLRKKDLRRELEDKERNAIREKRARDSASSSSSHSKRQRMDQIAAESAASVDADEAVDELNSSDDDDSDEDDTAALMAELEKIKKERAEEKAARDEEIKEKEEKQRMENILAGNPLLNDTPAGSSTSGGDFTVKRRWDDDVVFKNCAKGVEERKKEVTFINDAIRSEFHKKFMDKYIK.

2 disordered regions span residues 1-157 and 164-183; these read MTTA…EEKQ and AGNP…GGDF. The segment covering 25-34 has biased composition (polar residues); sequence KLSNQYSSKD. Coiled coils occupy residues 47 to 82 and 119 to 164; these read GQET…SASS and DSDE…NILA. Over residues 52-78 the composition is skewed to basic and acidic residues; the sequence is ADLRKKDLRRELEDKERNAIREKRARD. A compositionally biased stretch (acidic residues) spans 104–125; that stretch reads DADEAVDELNSSDDDDSDEDDT. Residues 131-157 show a composition bias toward basic and acidic residues; the sequence is ELEKIKKERAEEKAARDEEIKEKEEKQ.

This sequence belongs to the CWC15 family. As to quaternary structure, component of spliceosomal complex.

It localises to the nucleus. Its function is as follows. Component of a spliceosomal complex that is required for activating pre-mRNA splicing. The polypeptide is Spliceosome-associated protein CWC15 homolog (Caenorhabditis elegans).